The chain runs to 992 residues: UPF0182 protein BCG_3215c (992 aa).

7 consecutive transmembrane segments (helical) span residues 18 to 38 (ILIM…RLID), 63 to 83 (IVVC…GLAL), 113 to 133 (LVGI…AQSY), 175 to 195 (LVSV…FGGI), 210 to 230 (VQLV…YWLD), 259 to 279 (KLIL…AIAL), and 287 to 307 (IGLV…PLIV). A disordered region spans residues 906 to 938 (PTEAAVPPSPAANPPPPASGPQPPPVTAAPPVP). A compositionally biased stretch (pro residues) spans 912-938 (PPSPAANPPPPASGPQPPPVTAAPPVP).

The protein belongs to the UPF0182 family.

The protein resides in the cell membrane. This is UPF0182 protein BCG_3215c from Mycobacterium bovis (strain BCG / Pasteur 1173P2).